The sequence spans 839 residues: MAAAVAMRGSSSDGGGYDKVSGMDSGKYVRYTPEQVEALERVYADCPKPTSSRRQQLLRECPILANIEPKQIKVWFQNRRCRDKQRKESSRLQAVNRKLTAMNKLLMEENERLQKQVSQLVHENAHMRQQLQNTPLANDTSCESNVTTPQNPLRDASNPSGLLSIAEETLTEFLSKATGTAIDWVQMPGMKPGPDSVGIVAISHGCRGVAARACGLVNLEPTKVVEILKDRPSWFRDCRNLEVFTMIPAGNGGTVELVYTQLYAPTTLVPARDFWTLRYTTTMEDGSLVVCERSLSGSGGGPSAASAQQYVRAEMLPSGYLVRPCEGGGSIVHIVDHLDLEAWSVPEVLRPLYESSRVVAQKMTTAALRHIRQIAQETSGEVVYALGRQPAVLRTFSQRLSRGFNDAISGFNDDGWSIMGGDGVEDVVIACNSTKKIRSNSNAGIAFGAPGGIICAKASMLLQSVPPAVLVRFLREHRSEWADYNIDAYLASTLKTSACSLTGLRPMRFSGSQIIIPLAHTVENEEILEVVRLEGQPLTHDEALLSRDIHLLQLCTGIDEKSVGSSFQLVFAPIDDFPDETPLISSGFRVIPLDMKTDGASSGRTLDLASSLEVGSATAQASGDASADDCNLRSVLTIAFQFPYELHLQDSVAAMARQYVRSIVSAVQRVSMAISPSQTGLNAGQRIISGFPEAATLARWVCQSYHYHLGVELLSQSDGDAEQLLKMLWHYQDAILCCSFKEKPVFTFANKAGLDMLETSLVALQDLTLDRIFDEPGKEALFSNIPKLMEQGHVYLPSGVCMSGMGRHVSFDQAVAWKVLAEDSNVHCLAFCFVNWSFV.

Disordered stretches follow at residues 1 to 24 and 132 to 157; these read MAAAVAMRGSSSDGGGYDKVSGMD and QNTPLANDTSCESNVTTPQNPLRDAS. The segment at residues 24-87 is a DNA-binding region (homeobox); sequence DSGKYVRYTP…NRRCRDKQRK (64 aa). The stretch at 91 to 134 forms a coiled coil; sequence RLQAVNRKLTAMNKLLMEENERLQKQVSQLVHENAHMRQQLQNT. One can recognise an START domain in the interval 155-383; sequence DASNPSGLLS…IAQETSGEVV (229 aa).

The protein belongs to the HD-ZIP homeobox family. Class III subfamily. Expressed in stems, leaf sheaths and blades and panicles.

The protein localises to the nucleus. Probable transcription factor. This Oryza sativa subsp. japonica (Rice) protein is Homeobox-leucine zipper protein HOX10 (HOX10).